The primary structure comprises 552 residues: Urocanate hydratase (552 aa).

Residues 49 to 50, Gln-127, 173 to 175, Asp-193, 239 to 240, 260 to 264, 270 to 271, and Tyr-319 each bind NAD(+); these read GG, GMG, NA, QTSAH, and YI. Cys-407 is an active-site residue. NAD(+) is bound at residue Gly-489.

The protein belongs to the urocanase family. It depends on NAD(+) as a cofactor.

It localises to the cytoplasm. The enzyme catalyses 4-imidazolone-5-propanoate = trans-urocanate + H2O. Its pathway is amino-acid degradation; L-histidine degradation into L-glutamate; N-formimidoyl-L-glutamate from L-histidine: step 2/3. In terms of biological role, catalyzes the conversion of urocanate to 4-imidazolone-5-propionate. The sequence is that of Urocanate hydratase from Bacillus cereus (strain 03BB102).